The sequence spans 209 residues: Protein Bel-1 (209 aa).

Disordered stretches follow at residues 1–30, 123–143, and 156–185; these read MASK…LDLT, FLNS…PATS, and CSRP…GESG. 2 stretches are compositionally biased toward polar residues: residues 21 to 30 and 132 to 143; these read SHSTSGLDLT and TPKTDPTRPATS.

Functionally, transcriptional transactivator that activates the viral internal promoter (IP), thereby enhancing its own expression. This transactivation is repressed by nuclear factor I. Also transactivates the long terminal repeat (LTR) promoter, thereby inducing structural gene expression, initiating the late phase of infection. It is therefore a key regulator of viral gene expression. It directly binds to and activates DNA target sites of viral promoters and those of distinct cellular genes. Required for viral replication. The chain is Protein Bel-1 (bel1) from Felis catus (Cat).